The primary structure comprises 208 residues: MRLIRTLFVAALAMGTSLAHADDSAAVQRLTGLLNKAQTLTARFSQLTLDGSGTRLQETAGQLSLKRPGLFRWHTDAPNEQLLISNGEKVWLYDPDLEQVTIQKLDQRLTQTPALLLSGDISKISESFAITYKEGGNVVDFVLKPKTKDTLFDTLRLSFRSGKVNDMQMIDGVGQRTNILFFDVKMNEALDAKQFTFDVPPGVDVIQE.

The signal sequence occupies residues 1–21 (MRLIRTLFVAALAMGTSLAHA).

Belongs to the LolA family. Monomer.

Its subcellular location is the periplasm. Functionally, participates in the translocation of lipoproteins from the inner membrane to the outer membrane. Only forms a complex with a lipoprotein if the residue after the N-terminal Cys is not an aspartate (The Asp acts as a targeting signal to indicate that the lipoprotein should stay in the inner membrane). The protein is Outer-membrane lipoprotein carrier protein of Pseudomonas paraeruginosa (strain DSM 24068 / PA7) (Pseudomonas aeruginosa (strain PA7)).